The following is a 419-amino-acid chain: Metacaspase-1B (419 aa).

The interval 1–109 is disordered; sequence MYHPNYNYPP…PPMEAQQFGK (109 aa). Residues 33-50 are compositionally biased toward pro residues; the sequence is SPPPPQPYYSNGYPPPSQ. The span at 51 to 66 shows a compositional bias: low complexity; sequence SPHSYSPPQYPPHGQY. Polar residues predominate over residues 82–93; sequence QYRSYHSHSPSW. Residues His210 and Cys266 contribute to the active site.

Belongs to the peptidase C14B family.

Involved in cell death (apoptosis). This is Metacaspase-1B (casB) from Aspergillus oryzae (strain ATCC 42149 / RIB 40) (Yellow koji mold).